A 156-amino-acid polypeptide reads, in one-letter code: Small ribosomal subunit protein uS7 (156 aa).

Belongs to the universal ribosomal protein uS7 family. As to quaternary structure, part of the 30S ribosomal subunit. Contacts proteins S9 and S11.

Its function is as follows. One of the primary rRNA binding proteins, it binds directly to 16S rRNA where it nucleates assembly of the head domain of the 30S subunit. Is located at the subunit interface close to the decoding center, probably blocks exit of the E-site tRNA. The protein is Small ribosomal subunit protein uS7 of Anoxybacillus flavithermus (strain DSM 21510 / WK1).